The primary structure comprises 369 residues: Transmembrane protein adipocyte-associated 1 (369 aa).

N-linked (GlcNAc...) asparagine glycosylation is present at Asn-20. 7 consecutive transmembrane segments (helical) span residues 45 to 65 (LLLL…LPLA), 73 to 93 (SSPI…VGIA), 120 to 140 (FFLL…GHLE), 148 to 168 (VLAI…TLEI), 189 to 209 (QFWL…VILP), 237 to 257 (LLQG…LCCV), and 262 to 282 (FLYF…GFFG). N-linked (GlcNAc...) asparagine glycosylation is present at Asn-329.

The protein belongs to the UPF0359 family. In terms of tissue distribution, ubiquitous, with higher levels in heart, brain, lung, liver and kidney.

It localises to the membrane. The sequence is that of Transmembrane protein adipocyte-associated 1 (Tpra1) from Mus musculus (Mouse).